A 429-amino-acid polypeptide reads, in one-letter code: 4-hydroxy-3-methylbut-2-en-1-yl diphosphate synthase (flavodoxin) (429 aa).

Positions 310, 313, 356, and 363 each coordinate [4Fe-4S] cluster.

Belongs to the IspG family. [4Fe-4S] cluster is required as a cofactor.

It carries out the reaction (2E)-4-hydroxy-3-methylbut-2-enyl diphosphate + oxidized [flavodoxin] + H2O + 2 H(+) = 2-C-methyl-D-erythritol 2,4-cyclic diphosphate + reduced [flavodoxin]. It functions in the pathway isoprenoid biosynthesis; isopentenyl diphosphate biosynthesis via DXP pathway; isopentenyl diphosphate from 1-deoxy-D-xylulose 5-phosphate: step 5/6. In terms of biological role, converts 2C-methyl-D-erythritol 2,4-cyclodiphosphate (ME-2,4cPP) into 1-hydroxy-2-methyl-2-(E)-butenyl 4-diphosphate. In Bradyrhizobium sp. (strain BTAi1 / ATCC BAA-1182), this protein is 4-hydroxy-3-methylbut-2-en-1-yl diphosphate synthase (flavodoxin).